Consider the following 129-residue polypeptide: Small ribosomal subunit protein uS9 (129 aa).

The interval 110-129 (VERKKYGKKKARKSFQFSKR) is disordered. A compositionally biased stretch (basic residues) spans 114 to 129 (KYGKKKARKSFQFSKR).

Belongs to the universal ribosomal protein uS9 family.

The sequence is that of Small ribosomal subunit protein uS9 from Chlorobaculum parvum (strain DSM 263 / NCIMB 8327) (Chlorobium vibrioforme subsp. thiosulfatophilum).